Consider the following 199-residue polypeptide: Pyridoxal 5'-phosphate synthase subunit PdxT (199 aa).

Glycine 51–serine 53 is a binding site for L-glutamine. Residue cysteine 83 is the Nucleophile of the active site. Residues arginine 110 and isoleucine 137–arginine 138 contribute to the L-glutamine site. Residues histidine 172 and glutamate 174 each act as charge relay system in the active site.

This sequence belongs to the glutaminase PdxT/SNO family. As to quaternary structure, in the presence of PdxS, forms a dodecamer of heterodimers. Only shows activity in the heterodimer.

The catalysed reaction is aldehydo-D-ribose 5-phosphate + D-glyceraldehyde 3-phosphate + L-glutamine = pyridoxal 5'-phosphate + L-glutamate + phosphate + 3 H2O + H(+). It catalyses the reaction L-glutamine + H2O = L-glutamate + NH4(+). It functions in the pathway cofactor biosynthesis; pyridoxal 5'-phosphate biosynthesis. Catalyzes the hydrolysis of glutamine to glutamate and ammonia as part of the biosynthesis of pyridoxal 5'-phosphate. The resulting ammonia molecule is channeled to the active site of PdxS. This is Pyridoxal 5'-phosphate synthase subunit PdxT from Thermoplasma volcanium (strain ATCC 51530 / DSM 4299 / JCM 9571 / NBRC 15438 / GSS1).